Reading from the N-terminus, the 353-residue chain is Putative glycosyltransferase TagX (353 aa).

It belongs to the glycosyltransferase 2 family.

The sequence is that of Putative glycosyltransferase TagX (tagX) from Staphylococcus aureus (strain COL).